The chain runs to 844 residues: Protein translocase subunit SecA (844 aa).

Residues Gln87, 105-109 (GEGKT), and Asp495 each bind ATP. Positions 783–800 (QAPPEELKQEFKHKEEPK) are enriched in basic and acidic residues. Positions 783-844 (QAPPEELKQE…GQKYKKCCGA (62 aa)) are disordered. Positions 802–811 (LNYSGAQKET) are enriched in polar residues. Positions 816–826 (PERRGEPKVGR) are enriched in basic and acidic residues. Zn(2+)-binding residues include Cys830, Cys832, Cys841, and Cys842.

This sequence belongs to the SecA family. As to quaternary structure, monomer and homodimer. Part of the essential Sec protein translocation apparatus which comprises SecA, SecYEG and auxiliary proteins SecDF-YajC and YidC. It depends on Zn(2+) as a cofactor.

It is found in the cell inner membrane. The protein resides in the cytoplasm. The catalysed reaction is ATP + H2O + cellular proteinSide 1 = ADP + phosphate + cellular proteinSide 2.. Functionally, part of the Sec protein translocase complex. Interacts with the SecYEG preprotein conducting channel. Has a central role in coupling the hydrolysis of ATP to the transfer of proteins into and across the cell membrane, serving as an ATP-driven molecular motor driving the stepwise translocation of polypeptide chains across the membrane. The protein is Protein translocase subunit SecA of Nitratidesulfovibrio vulgaris (strain DSM 19637 / Miyazaki F) (Desulfovibrio vulgaris).